The primary structure comprises 368 residues: MIEVYTEHEQGKKWLEKHKNCCPIFACILGFTATGLIPRISAAGATPEDRKYTAIADAEFLIKGIKSDYQYPLPSLKKGVSPVFITRALVESLNIPIYLFNAGLVYPPPIPHIDLGGIAANCLTTGKALPLTTIRHLFQQGLHWGEKLAINAPNSYLIISECVVGGTTTALAILTGLGIDATGKVNSSHPQCNHQQKSSIVRTGLTQAEFYPILQPIDPFSLVGAVGDPMQIVAAGMAIAASRQTGVLLAGGTQMLAVYALIKAIIHDYQESANLEKIVVGTTRWVAEDPTGDTVGLAQGIGKVSLLATKLSFLTSECPQLRIYEEGYVKEGVGAGGCAIAASLSYGWTQEQLLEAIESLVNAKKELF.

Belongs to the UPF0284 family.

This is UPF0284 protein PCC8801_3324 from Rippkaea orientalis (strain PCC 8801 / RF-1) (Cyanothece sp. (strain PCC 8801)).